The sequence spans 187 residues: Large ribosomal subunit protein uL5 (187 aa).

The protein belongs to the universal ribosomal protein uL5 family. As to quaternary structure, part of the 50S ribosomal subunit; part of the 5S rRNA/L5/L18/L25 subcomplex. Contacts the 5S rRNA and the P site tRNA. Forms a bridge to the 30S subunit in the 70S ribosome.

Its function is as follows. This is one of the proteins that bind and probably mediate the attachment of the 5S RNA into the large ribosomal subunit, where it forms part of the central protuberance. In the 70S ribosome it contacts protein S13 of the 30S subunit (bridge B1b), connecting the 2 subunits; this bridge is implicated in subunit movement. Contacts the P site tRNA; the 5S rRNA and some of its associated proteins might help stabilize positioning of ribosome-bound tRNAs. This chain is Large ribosomal subunit protein uL5, found in Nocardia farcinica (strain IFM 10152).